We begin with the raw amino-acid sequence, 189 residues long: Protein Flattop (189 aa).

A disordered region spans residues 112-189; it reads EISGKPFDPD…PPPSPCKSTK (78 aa). Polar residues predominate over residues 137–148; that stretch reads APNPTIIPSSPV. Residues 178–189 are compositionally biased toward pro residues; that stretch reads NNPPPSPCKSTK.

This sequence belongs to the Flattop family. As to quaternary structure, microtubule inner protein component of sperm flagellar doublet microtubules. Interacts with DLG3. As to expression, expressed in mono- and multiciliated tissues during planar cell polarity acquisition.

The protein resides in the cytoplasm. It is found in the cytoskeleton. Its subcellular location is the cilium basal body. The protein localises to the cilium axoneme. It localises to the flagellum axoneme. The protein resides in the apical cell membrane. Its function is as follows. Microtubule inner protein (MIP) part of the dynein-decorated doublet microtubules (DMTs) in cilia axoneme. Acts as a regulator of cilium basal body docking and positioning in mono- and multiciliated cells. Regulates basal body docking and cilia formation in multiciliated lung cells. Regulates kinocilium positioning and stereocilia bundle morphogenesis in the inner ear. In Mus musculus (Mouse), this protein is Protein Flattop.